A 187-amino-acid chain; its full sequence is UPF0340 protein SPP_0683 (187 aa).

Belongs to the UPF0340 family.

The chain is UPF0340 protein SPP_0683 from Streptococcus pneumoniae (strain P1031).